Here is a 289-residue protein sequence, read N- to C-terminus: Probable endonuclease 4 (289 aa).

Residues His-74, His-115, Glu-150, Asp-184, His-187, His-218, Asp-231, His-233, and Glu-263 each coordinate Zn(2+).

Belongs to the AP endonuclease 2 family. Requires Zn(2+) as cofactor.

The enzyme catalyses Endonucleolytic cleavage to 5'-phosphooligonucleotide end-products.. Its function is as follows. Endonuclease IV plays a role in DNA repair. It cleaves phosphodiester bonds at apurinic or apyrimidinic (AP) sites, generating a 3'-hydroxyl group and a 5'-terminal sugar phosphate. This Mycoplasma capricolum subsp. capricolum (strain California kid / ATCC 27343 / NCTC 10154) protein is Probable endonuclease 4.